A 333-amino-acid chain; its full sequence is Electron transfer flavoprotein subunit alpha, mitochondrial (333 aa).

A mitochondrion-targeting transit peptide spans 1–19; that stretch reads MFRAAAPGQLRRAASLLRF. Residues 20–204 are domain I; sequence QSTLVIAEHA…EISEWLDQKL (185 aa). An N6-acetyllysine; alternate modification is found at lysine 59. Residue lysine 59 is modified to N6-succinyllysine; alternate. Lysine 62 carries the post-translational modification N6-acetyllysine. Residue lysine 69 is modified to N6-acetyllysine; alternate. Lysine 69 carries the N6-succinyllysine; alternate modification. The residue at position 75 (lysine 75) is an N6-acetyllysine. At lysine 85 the chain carries N6-acetyllysine; alternate. Lysine 85 carries the N6-succinyllysine; alternate modification. Threonine 93 carries the phosphothreonine modification. N6-acetyllysine occurs at positions 101 and 139. The residue at position 140 (serine 140) is a Phosphoserine. Lysine 158 carries the N6-acetyllysine; alternate modification. Lysine 158 is subject to N6-succinyllysine; alternate. At lysine 164 the chain carries N6-acetyllysine. The residue at position 187 (lysine 187) is an N6-succinyllysine. Lysine 203 bears the N6-acetyllysine; alternate mark. Lysine 203 carries the N6-succinyllysine; alternate modification. The domain II stretch occupies residues 205 to 333; the sequence is TKSDRPELTG…PEMTEILKKK (129 aa). At lysine 216 the chain carries N6-succinyllysine. Position 223 (arginine 223) interacts with FAD. An N6-acetyllysine; alternate mark is found at lysine 226 and lysine 232. 2 positions are modified to N6-succinyllysine; alternate: lysine 226 and lysine 232. FAD is bound by residues serine 248, 263–266, 281–286, and asparagine 300; these read VGQT and SGAIQH. Lysine 301 bears the N6-succinyllysine mark. Position 318–319 (318–319) interacts with FAD; it reads DL.

It belongs to the ETF alpha-subunit/FixB family. In terms of assembly, heterodimer composed of ETFA and ETFB. Identified in a complex that contains ETFA, ETFB and ETFRF1. Interaction with ETFRF1 promotes dissociation of the bound FAD and loss of electron transfer activity. Interacts with TASOR. FAD serves as cofactor. The N-terminus is blocked.

Its subcellular location is the mitochondrion matrix. Heterodimeric electron transfer flavoprotein that accepts electrons from several mitochondrial dehydrogenases, including acyl-CoA dehydrogenases, glutaryl-CoA and sarcosine dehydrogenase. It transfers the electrons to the main mitochondrial respiratory chain via ETF-ubiquinone oxidoreductase (ETF dehydrogenase). Required for normal mitochondrial fatty acid oxidation and normal amino acid metabolism. The sequence is that of Electron transfer flavoprotein subunit alpha, mitochondrial (ETFA) from Homo sapiens (Human).